A 4518-amino-acid chain; its full sequence is Dynein axonemal heavy chain 11 (4518 aa).

A stem region spans residues 1–1857 (MAASVAAQEA…LVHICDAQFQ (1857 aa)). AAA regions lie at residues 1858-2079 (YFYE…VLVV), 2139-2368 (QMVR…TSFK), 2474-2721 (TMDP…VFQG), and 2819-3068 (NYND…EGRH). Residues 1896–1903 (GPAGTGKT), 2177–2184 (GNAGTGKS), 2512–2519 (GNAGVGKT), and 2857–2864 (GVGGSGKQ) each bind ATP. The stalk stretch occupies residues 3074-3405 (KSFLEQISLF…GQSIKSFEAQ (332 aa)). Residues 3322–3391 (LAQANLELAT…NRLVKELEVK (70 aa)) adopt a coiled-coil conformation. AAA regions lie at residues 3461-3688 (LTDD…EIER) and 3898-4124 (LRNF…VLYN).

Belongs to the dynein heavy chain family. In terms of assembly, consists of at least two heavy chains and a number of intermediate and light chains. Interacts with CFAP45.

It is found in the cytoplasm. Its subcellular location is the cytoskeleton. It localises to the cilium axoneme. Functionally, force generating protein of respiratory cilia. Produces force towards the minus ends of microtubules. Dynein has ATPase activity; the force-producing power stroke is thought to occur on release of ADP. In Sus scrofa (Pig), this protein is Dynein axonemal heavy chain 11 (DNAH11).